Consider the following 69-residue polypeptide: Putative membrane protein insertion efficiency factor (69 aa).

This sequence belongs to the UPF0161 family.

It is found in the cell inner membrane. Could be involved in insertion of integral membrane proteins into the membrane. The chain is Putative membrane protein insertion efficiency factor from Nitrosomonas europaea (strain ATCC 19718 / CIP 103999 / KCTC 2705 / NBRC 14298).